A 100-amino-acid chain; its full sequence is UPF0248 protein APE_0939 (100 aa).

It belongs to the UPF0248 family.

In Aeropyrum pernix (strain ATCC 700893 / DSM 11879 / JCM 9820 / NBRC 100138 / K1), this protein is UPF0248 protein APE_0939.